Here is a 100-residue protein sequence, read N- to C-terminus: MLKNRYLKYLFILILLSILSIMPIFAIIYRIFSRNYLYAFIIVCLFFQILAHIKFFLNLDFSLEQRWKLISVIFSLVVGLIILLGSIWVIKNLNNNLCIM.

Residues 1-9 (MLKNRYLKY) are Cytoplasmic-facing. Residues 10–32 (LFILILLSILSIMPIFAIIYRIF) traverse the membrane as a helical segment. The Extracellular segment spans residues 33–36 (SRNY). Residues 37 to 59 (LYAFIIVCLFFQILAHIKFFLNL) form a helical membrane-spanning segment. At 60–68 (DFSLEQRWK) the chain is on the cytoplasmic side. A helical transmembrane segment spans residues 69–90 (LISVIFSLVVGLIILLGSIWVI). At 91–100 (KNLNNNLCIM) the chain is on the extracellular side.

This sequence belongs to the cytochrome c oxidase bacterial subunit 4 family. In terms of assembly, heterooctamer of two A chains, two B chains, two C chains and two D chains.

The protein resides in the cell membrane. Cytochrome bo(3) ubiquinol terminal oxidase is the component of the aerobic respiratory chain of E.coli that predominates when cells are grown at high aeration. Has proton pump activity across the membrane in addition to electron transfer, pumping 2 protons/electron. The sequence is that of Cytochrome bo(3) ubiquinol oxidase subunit 4 (cyoD) from Buchnera aphidicola subsp. Baizongia pistaciae (strain Bp).